The following is a 270-amino-acid chain: Complement factor H-related protein 2 (270 aa).

Positions 1-18 (MWLLVSVILISRISSVGG) are cleaved as a signal peptide. Sushi domains lie at 22 to 84 (FCDF…PKCL), 85 to 142 (RLCF…KCRS), 147 to 205 (EKCG…KCLD), and 206 to 268 (PCVI…PSCE). 8 cysteine pairs are disulfide-bonded: cysteine 23–cysteine 72, cysteine 55–cysteine 83, cysteine 87–cysteine 129, cysteine 114–cysteine 140, cysteine 149–cysteine 192, cysteine 178–cysteine 203, cysteine 207–cysteine 257, and cysteine 241–cysteine 267. The N-linked (GlcNAc...) asparagine glycan is linked to asparagine 126.

Head-to-tail homodimer and heterodimer with CFHR1 or CFHR5. N-glycosylated. In terms of tissue distribution, expressed by the liver and secreted in plasma.

The protein resides in the secreted. Its function is as follows. Involved in complement regulation. The dimerized forms have avidity for tissue-bound complement fragments and efficiently compete with the physiological complement inhibitor CFH. Can associate with lipoproteins and may play a role in lipid metabolism. This is Complement factor H-related protein 2 (CFHR2) from Homo sapiens (Human).